The primary structure comprises 437 residues: Na(+)/H(+) antiporter NhaA (437 aa).

Transmembrane regions (helical) follow at residues 29-49 (TAGI…NTAW), 74-94 (LKHW…ALEL), 111-131 (LPVA…LLLV), 139-159 (GWGT…ALLG), 168-188 (LFLL…VAVG), 196-216 (VALG…LLGI), 229-249 (IWLA…ILGL), 307-327 (IALH…SNAG), 341-361 (IAIV…FSFL), 376-396 (WSLL…ALFI), and 411-431 (LGVL…LTLL).

Belongs to the NhaA Na(+)/H(+) (TC 2.A.33) antiporter family.

Its subcellular location is the cell inner membrane. It catalyses the reaction Na(+)(in) + 2 H(+)(out) = Na(+)(out) + 2 H(+)(in). Its function is as follows. Na(+)/H(+) antiporter that extrudes sodium in exchange for external protons. This chain is Na(+)/H(+) antiporter NhaA, found in Rhizobium meliloti (strain 1021) (Ensifer meliloti).